Consider the following 176-residue polypeptide: Probable RNA-binding protein EIF1AD (176 aa).

The S1-like domain maps to 5 to 89 (TKKRYITNKV…VKGEIEYILD (85 aa)). Over residues 117–128 (AKRGKANDKMID) the composition is skewed to basic and acidic residues. The segment at 117–176 (AKRGKANDKMIDDDMLPPSESEEEDDESEDEIEDTYDEDEETDDEEFDTYNPNRMQAPSK) is disordered. Acidic residues predominate over residues 129 to 164 (DDMLPPSESEEEDDESEDEIEDTYDEDEETDDEEFD). Residues 166 to 176 (YNPNRMQAPSK) are compositionally biased toward polar residues.

It belongs to the EIF1AD family.

This Caenorhabditis briggsae protein is Probable RNA-binding protein EIF1AD.